We begin with the raw amino-acid sequence, 338 residues long: Endonuclease V (338 aa).

Mg(2+)-binding residues include aspartate 52 and aspartate 126. Residues 253–338 (QLGVAPAQRK…PSPAWVQSPP (86 aa)) are disordered. Basic and acidic residues-rich tracts occupy residues 260–270 (QRKDRSQKEQR) and 287–323 (RPPE…HQED). Residues 328–338 (PPSPAWVQSPP) show a composition bias toward pro residues.

This sequence belongs to the endonuclease V family. As to quaternary structure, monomer. Interacts with PABPC1; the interaction is RNA-dependent and stimulates ENDOV activity. It depends on Mg(2+) as a cofactor. In terms of tissue distribution, highest levels detected in liver with high levels also found in heart, kidney and testis. Expressed at low levels in brain.

The protein localises to the cytoplasm. Its subcellular location is the nucleus. It is found in the nucleolus. It localises to the stress granule. Functionally, endoribonuclease that specifically cleaves inosine-containing RNAs: cleaves RNA at the second phosphodiester bond 3' to inosine. Active against both single-stranded and double-stranded RNAs. Has strong preference for single-stranded RNAs (ssRNAs) toward double-stranded RNAs (dsRNAs). Cleaves mRNAs and tRNAs containing inosine. Also able to cleave structure-specific dsRNA substrates containing the specific sites 5'-IIUI-3' and 5'-UIUU-3'. Inosine is present in a number of RNAs following editing; the function of inosine-specific endoribonuclease is still unclear: it could either play a regulatory role in edited RNAs, or be involved in antiviral response by removing the hyperedited long viral dsRNA genome that has undergone A-to-I editing. Binds branched DNA structures. This is Endonuclease V (Endov) from Mus musculus (Mouse).